The chain runs to 88 residues: Small ribosomal subunit protein uS17 (88 aa).

Belongs to the universal ribosomal protein uS17 family. In terms of assembly, part of the 30S ribosomal subunit.

Functionally, one of the primary rRNA binding proteins, it binds specifically to the 5'-end of 16S ribosomal RNA. This Levilactobacillus brevis (strain ATCC 367 / BCRC 12310 / CIP 105137 / JCM 1170 / LMG 11437 / NCIMB 947 / NCTC 947) (Lactobacillus brevis) protein is Small ribosomal subunit protein uS17.